Reading from the N-terminus, the 397-residue chain is Serpin-Z7 (397 aa).

Residue A2 is modified to N-acetylalanine. An RCL region spans residues 344-368; sequence GTKAGAATGDVIVDRSLPIRMDFVA.

The protein belongs to the serpin family. Highly expressed in endosperm, at intermediate level in embryo and at lower levels in roots.

In terms of biological role, inhibits chymotrypsin in vitro. The sequence is that of Serpin-Z7 (PAZ7) from Hordeum vulgare (Barley).